Here is a 525-residue protein sequence, read N- to C-terminus: GMP synthase [glutamine-hydrolyzing] (525 aa).

Positions 9–207 (RILILDFGSQ…VRDICQCEAL (199 aa)) constitute a Glutamine amidotransferase type-1 domain. The active-site Nucleophile is cysteine 86. Residues histidine 181 and glutamate 183 contribute to the active site. In terms of domain architecture, GMPS ATP-PPase spans 208–400 (WTPAKIIDDA…LGLPYDMLYR (193 aa)). Position 235–241 (235–241 (SGGVDSS)) interacts with ATP.

As to quaternary structure, homodimer.

It catalyses the reaction XMP + L-glutamine + ATP + H2O = GMP + L-glutamate + AMP + diphosphate + 2 H(+). It participates in purine metabolism; GMP biosynthesis; GMP from XMP (L-Gln route): step 1/1. Its function is as follows. Catalyzes the synthesis of GMP from XMP. This chain is GMP synthase [glutamine-hydrolyzing], found in Klebsiella pneumoniae (strain 342).